We begin with the raw amino-acid sequence, 366 residues long: Growth hormone secretagogue receptor type 1 (366 aa).

Residues 1 to 40 (MWNATLSEEPGYNLTLPDLGWDAPADNDSLTDELLPLFPA) lie on the Extracellular side of the membrane. Asn-3, Asn-13, and Asn-27 each carry an N-linked (GlcNAc...) asparagine glycan. Residues 41–66 (PLLAGVTATCVALFVVGIAGNLLTML) traverse the membrane as a helical segment. Over 67–72 (VVSRFR) the chain is Cytoplasmic. A helical membrane pass occupies residues 73–96 (ELRTTTNLYLSSMAFSDLLIFLCM). Residues 97-117 (PLDLVRLWQYRPWNFGDLLCK) are Extracellular-facing. A disulfide bridge connects residues Cys-116 and Cys-198. A helical transmembrane segment spans residues 118 to 139 (LFQFVSESCTYATVLTITALSV). Residues 140–162 (ERYFAICFPLRAKVVVTKGRVKL) lie on the Cytoplasmic side of the membrane. Residues 163-183 (VILVIWAVAFCSAGPIFVLVG) traverse the membrane as a helical segment. The Extracellular segment spans residues 184 to 211 (VEHENGTDPRDTNECRATEFAVRSGLLT). Asn-188 is a glycosylation site (N-linked (GlcNAc...) asparagine). The chain crosses the membrane as a helical span at residues 212–235 (VMVWVSSVFFFLPVFCLTVLYSLI). Residues 236-263 (GRKLWRRKRGEAAVGASLRDQNHKQTVK) lie on the Cytoplasmic side of the membrane. The helical transmembrane segment at 264-285 (MLAVVVFAFILCWLPFHVGRYL) threads the bilayer. Topologically, residues 286–302 (FSKSFEPGSLEIAQISQ) are extracellular. The helical transmembrane segment at 303–326 (YCNLVSFVLFYLSAAINPILYNIM) threads the bilayer. The Cytoplasmic segment spans residues 327-366 (SKKYRVAVFKLLGFEPFSQRKLSTLKDESSRAWTETSINT).

The protein belongs to the G-protein coupled receptor 1 family.

It is found in the cell membrane. Functionally, receptor for ghrelin, coupled to G-alpha-11 proteins. Stimulates growth hormone secretion. Also binds other growth hormone releasing peptides (GHRP) (e.g. Met-enkephalin and GHRP-6) as well as non-peptide, low molecular weight secretagogues (e.g. L-692,429, MK-0677, adenosine). This is Growth hormone secretagogue receptor type 1 (GHSR) from Mustela putorius furo (European domestic ferret).